The following is a 252-amino-acid chain: Phosphate import ATP-binding protein PstB 1 (252 aa).

The ABC transporter domain occupies Leu6–Ile247. Residue Gly38 to Ser45 participates in ATP binding.

Belongs to the ABC transporter superfamily. Phosphate importer (TC 3.A.1.7) family. The complex is composed of two ATP-binding proteins (PstB), two transmembrane proteins (PstC and PstA) and a solute-binding protein (PstS).

It is found in the cell membrane. It carries out the reaction phosphate(out) + ATP + H2O = ADP + 2 phosphate(in) + H(+). Part of the ABC transporter complex PstSACB involved in phosphate import. Responsible for energy coupling to the transport system. This Streptococcus agalactiae serotype Ia (strain ATCC 27591 / A909 / CDC SS700) protein is Phosphate import ATP-binding protein PstB 1.